Consider the following 427-residue polypeptide: MNYQRPKGTADILPGQSERWQQVEAVARKIFAQYQYHEIRTPIFENVDVFSRSAGDTSDIVTKEMYTFKDKGDRMMALRPEGTAGVVRAYVENKLYGPEHAKPYKVYYLGPMFRYERPQSGRQRQFHQIGVEAFGSDSPVLDAETLALAKQLLEALGAKHLKFVINSLGDPATRKAFHAALVDYLTPFKDQLSEDSKVRLVKNPLRILDSKDKHDQEIVANAPSILDYLTPEAQQHFDRVKTLLQGLGIPFEVDATMVRGLDYYNHTIFEVMSDDKVFGGGYTTILAGGRYNGLVEELGGPETPGIGFAMGVERLMLLMQGELPTAQPDAYIVTIDQGADQEALQMLTAIRQQGFTGEMDYMGRKPKGQFKAANKANAKLVLTIGESERAAGTVQIKNMATGDQQAFPQADVLADFGKIYTQVMEAK.

Belongs to the class-II aminoacyl-tRNA synthetase family. As to quaternary structure, homodimer.

The protein resides in the cytoplasm. The catalysed reaction is tRNA(His) + L-histidine + ATP = L-histidyl-tRNA(His) + AMP + diphosphate + H(+). The sequence is that of Histidine--tRNA ligase from Lacticaseibacillus casei (strain BL23) (Lactobacillus casei).